The chain runs to 182 residues: Large ribosomal subunit protein uL5 (182 aa).

This sequence belongs to the universal ribosomal protein uL5 family. Part of the 50S ribosomal subunit; part of the 5S rRNA/L5/L18/L25 subcomplex. Contacts the 5S rRNA and the P site tRNA. Forms a bridge to the 30S subunit in the 70S ribosome.

Its function is as follows. This is one of the proteins that bind and probably mediate the attachment of the 5S RNA into the large ribosomal subunit, where it forms part of the central protuberance. In the 70S ribosome it contacts protein S13 of the 30S subunit (bridge B1b), connecting the 2 subunits; this bridge is implicated in subunit movement. Contacts the P site tRNA; the 5S rRNA and some of its associated proteins might help stabilize positioning of ribosome-bound tRNAs. The sequence is that of Large ribosomal subunit protein uL5 from Nostoc punctiforme (strain ATCC 29133 / PCC 73102).